The primary structure comprises 488 residues: Cis-aconitate decarboxylase (488 aa).

It belongs to the PrpD family. Homodimer. Expressed in LPS-tolerized macrophages (at protein level). Expressed in the luminal epithelial cells of pregnant uterus. Expressed in microglia and macrophage cells.

It is found in the mitochondrion. It catalyses the reaction cis-aconitate + H(+) = itaconate + CO2. Its function is as follows. Cis-aconitate decarboxylase that catalyzes production of itaconate and is involved in the inhibition of the inflammatory response. Acts as a negative regulator of the Toll-like receptors (TLRs)-mediated inflammatory innate response by stimulating the tumor necrosis factor alpha-induced protein TNFAIP3 expression via reactive oxygen species (ROS) in LPS-tolerized macrophages. Involved in antimicrobial response of innate immune cells; ACOD1-mediated itaconic acid production contributes to the antimicrobial activity of macrophages by generating itaconate, leading to alkylation of proteins, such as TFEB. Involved in antiviral response following infection by flavivirus in neurons: ACOD1-mediated itaconate production inhibits the activity of succinate dehydrogenase, generating a metabolic state in neurons that suppresses replication of viral genomes. Plays a role in the embryo implantation. In Mus musculus (Mouse), this protein is Cis-aconitate decarboxylase.